The chain runs to 215 residues: Adenylate kinase (215 aa).

10 to 15 (GCGKGT) contributes to the ATP binding site. Residues 30–59 (STGDIFRQTIDQKGPYWEELKSYISKGLLV) form an NMP region. AMP-binding positions include Thr-31, Arg-36, 57 to 59 (LLV), and Gln-91. Residues 120-157 (GRRICSKCKRIYNIHYSAPKKEDICDDDGEFLIQRKDD) form an LID region. Arg-121 provides a ligand contact to ATP. Cys-124 and Cys-127 together coordinate Zn(2+). 130 to 131 (IY) is a binding site for ATP. Cys-144 and Asp-147 together coordinate Zn(2+). Residues Arg-154 and Arg-165 each contribute to the AMP site.

Belongs to the adenylate kinase family. Monomer.

Its subcellular location is the cytoplasm. The enzyme catalyses AMP + ATP = 2 ADP. It functions in the pathway purine metabolism; AMP biosynthesis via salvage pathway; AMP from ADP: step 1/1. Its function is as follows. Catalyzes the reversible transfer of the terminal phosphate group between ATP and AMP. Plays an important role in cellular energy homeostasis and in adenine nucleotide metabolism. The chain is Adenylate kinase from Malacoplasma penetrans (strain HF-2) (Mycoplasma penetrans).